The following is a 476-amino-acid chain: ATP synthase subunit beta (476 aa).

154 to 161 lines the ATP pocket; that stretch reads GGAGVGKT.

The protein belongs to the ATPase alpha/beta chains family. F-type ATPases have 2 components, CF(1) - the catalytic core - and CF(0) - the membrane proton channel. CF(1) has five subunits: alpha(3), beta(3), gamma(1), delta(1), epsilon(1). CF(0) has three main subunits: a(1), b(2) and c(9-12). The alpha and beta chains form an alternating ring which encloses part of the gamma chain. CF(1) is attached to CF(0) by a central stalk formed by the gamma and epsilon chains, while a peripheral stalk is formed by the delta and b chains.

Its subcellular location is the cell inner membrane. It catalyses the reaction ATP + H2O + 4 H(+)(in) = ADP + phosphate + 5 H(+)(out). Its function is as follows. Produces ATP from ADP in the presence of a proton gradient across the membrane. The catalytic sites are hosted primarily by the beta subunits. The protein is ATP synthase subunit beta of Afipia carboxidovorans (strain ATCC 49405 / DSM 1227 / KCTC 32145 / OM5) (Oligotropha carboxidovorans).